Consider the following 768-residue polypeptide: UPF0313 protein VV2143 (768 aa).

A Radical SAM core domain is found at 363–640 (AYDMIKTSVN…LHKALLRYHD (278 aa)). Residues Cys-377, Cys-381, and Cys-384 each contribute to the [4Fe-4S] cluster site. Residues 674 to 768 (DARTPAQRRK…GGRNQPSRAR (95 aa)) form a disordered region. Basic residues predominate over residues 679 to 689 (AQRRKSGRHGA). Residues 719-731 (GGQSNSAPSRSGS) are compositionally biased toward polar residues.

This sequence belongs to the UPF0313 family. Requires [4Fe-4S] cluster as cofactor.

The protein is UPF0313 protein VV2143 of Vibrio vulnificus (strain YJ016).